Here is a 95-residue protein sequence, read N- to C-terminus: Large ribosomal subunit protein bL25 (95 aa).

The protein belongs to the bacterial ribosomal protein bL25 family. As to quaternary structure, part of the 50S ribosomal subunit; part of the 5S rRNA/L5/L18/L25 subcomplex. Contacts the 5S rRNA. Binds to the 5S rRNA independently of L5 and L18.

Functionally, this is one of the proteins that binds to the 5S RNA in the ribosome where it forms part of the central protuberance. This chain is Large ribosomal subunit protein bL25, found in Shewanella sp. (strain ANA-3).